A 348-amino-acid chain; its full sequence is Probable WRKY transcription factor 27 (348 aa).

4 disordered regions span residues 19–52 (VSTT…ASSS), 67–90 (TTTT…SPSP), 133–153 (LLQQ…QQKR), and 218–320 (GEHT…LIPN). Pro residues predominate over residues 75–85 (SPPPLLPPPKA). A compositionally biased stretch (low complexity) spans 133-142 (LLQQQSQPPL). The segment covering 143–153 (RSRKRKNQQKR) has biased composition (basic residues). The WRKY DNA-binding region spans 159–225 (TQENLSSDLW…YTGEHTHPRP (67 aa)). Residues 228-242 (RNSLAGSTRNKSQPV) are compositionally biased toward polar residues. Positions 274 to 315 (DVQETNGDEDMVGQEVNMEEEEEEEEVEEDDEEEEDDDDVDD) are enriched in acidic residues.

The protein belongs to the WRKY group II-e family.

The protein localises to the nucleus. Its function is as follows. Transcription factor. Interacts specifically with the W box (5'-(T)TGAC[CT]-3'), a frequently occurring elicitor-responsive cis-acting element. In Arabidopsis thaliana (Mouse-ear cress), this protein is Probable WRKY transcription factor 27 (WRKY27).